The following is a 256-amino-acid chain: Pimeloyl-[acyl-carrier protein] methyl ester esterase (256 aa).

One can recognise an AB hydrolase-1 domain in the interval His15–Pro242. Substrate is bound by residues Trp22, Ser82–Leu83, and Phe143–Gln147. The active-site Nucleophile is the Ser82. Residues Asp207 and His235 contribute to the active site. His235 is a binding site for substrate.

Belongs to the AB hydrolase superfamily. Carboxylesterase BioH family. In terms of assembly, monomer.

The protein localises to the cytoplasm. The catalysed reaction is 6-carboxyhexanoyl-[ACP] methyl ester + H2O = 6-carboxyhexanoyl-[ACP] + methanol + H(+). Its pathway is cofactor biosynthesis; biotin biosynthesis. Its function is as follows. The physiological role of BioH is to remove the methyl group introduced by BioC when the pimeloyl moiety is complete. It allows to synthesize pimeloyl-ACP via the fatty acid synthetic pathway through the hydrolysis of the ester bonds of pimeloyl-ACP esters. In Escherichia coli O6:H1 (strain CFT073 / ATCC 700928 / UPEC), this protein is Pimeloyl-[acyl-carrier protein] methyl ester esterase.